Here is a 355-residue protein sequence, read N- to C-terminus: Phytoene synthase (355 aa).

It belongs to the phytoene/squalene synthase family. ATP serves as cofactor. Mn(2+) is required as a cofactor. It depends on Mg(2+) as a cofactor.

Its pathway is carotenoid biosynthesis; phytoene biosynthesis. Functionally, involved in the biosynthesis of carotenoids. Catalyzes the condensation of two molecules of geranylgeranyl diphosphate (GGPP) to give prephytoene diphosphate (PPPP) and the subsequent rearrangement of the cyclopropylcarbinyl intermediate to yield phytoene. In Cereibacter sphaeroides (strain ATCC 17023 / DSM 158 / JCM 6121 / CCUG 31486 / LMG 2827 / NBRC 12203 / NCIMB 8253 / ATH 2.4.1.) (Rhodobacter sphaeroides), this protein is Phytoene synthase (crtB).